A 51-amino-acid polypeptide reads, in one-letter code: Insulin (51 aa).

Intrachain disulfides connect C7-C37, C19-C50, and C36-C41.

The protein belongs to the insulin family. As to quaternary structure, heterodimer of a B chain and an A chain linked by two disulfide bonds.

It localises to the secreted. In terms of biological role, insulin decreases blood glucose concentration. It increases cell permeability to monosaccharides, amino acids and fatty acids. It accelerates glycolysis, the pentose phosphate cycle, and glycogen synthesis in liver. The chain is Insulin (INS) from Ptyas dhumnades (Big-eyed ratsnake).